Here is a 428-residue protein sequence, read N- to C-terminus: C4-dicarboxylate transport protein (428 aa).

8 consecutive transmembrane segments (helical) span residues 8–28 (VLYV…HYYP), 44–64 (LIKM…IAGM), 78–98 (LLYF…ATHI), 148–168 (GEIL…AHLG), 184–204 (VLFG…FGAM), 222–242 (LIGT…GAIA), 307–327 (IYMT…LTWM), and 355–375 (AATL…ILGI).

The protein belongs to the dicarboxylate/amino acid:cation symporter (DAACS) (TC 2.A.23) family.

The protein resides in the cell inner membrane. In terms of biological role, responsible for the transport of dicarboxylates such as succinate, fumarate, and malate from the periplasm across the membrane. This Burkholderia mallei (strain ATCC 23344) protein is C4-dicarboxylate transport protein.